A 431-amino-acid polypeptide reads, in one-letter code: SPI-1 type 3 secretion system ATPase (431 aa).

162–167 (GCGKTM) contacts ATP.

The protein belongs to the ATPase alpha/beta chains family. T3SS ATPase subfamily. In terms of assembly, the core secretion machinery of the T3SS is composed of approximately 20 different proteins, including cytoplasmic components, a base, an export apparatus and a needle. This subunit is part of the cytosolic complex. Forms homohexamers.

It is found in the cytoplasm. It carries out the reaction ATP + H2O + cellular proteinSide 1 = ADP + phosphate + cellular proteinSide 2.. ATPase component of the type III secretion system (T3SS), also called injectisome, which is used to inject bacterial effector proteins into eukaryotic host cells. Acts as a molecular motor to provide the energy that is required for the export of proteins. Required for type III secretion apparatus (T3SA) formation, proper protein secretion, host cell invasion and virulence. May play a critical role in T3SS substrate recognition, disassembly of the effector/chaperone complex and unfolding of the effector in an ATP-dependent manner prior to secretion. The sequence is that of SPI-1 type 3 secretion system ATPase from Salmonella typhi.